Here is a 161-residue protein sequence, read N- to C-terminus: DNA-directed RNA polymerase 18 kDa subunit (161 aa).

It belongs to the poxviridae DNA-directed RNA polymerase 18 kDa subunit family. As to quaternary structure, the DNA-dependent RNA polymerase used for intermediate and late genes expression consists of eight subunits Rpo30/OPG66, Rpo7/OPG90, Rpo22/OPG103, Rpo147/OPG105, Rpo18/OPG119, Rpo19/OPG131, Rpo132/OPG151 and Rpo35/OPG156. The same holoenzyme, with the addition of the transcription-specificity factor OPG109, is used for early gene expression.

It localises to the virion. It carries out the reaction RNA(n) + a ribonucleoside 5'-triphosphate = RNA(n+1) + diphosphate. Functionally, part of the DNA-dependent RNA polymerase which catalyzes the transcription of viral DNA into RNA using the four ribonucleoside triphosphates as substrates. Responsible for the transcription of early, intermediate and late genes. DNA-dependent RNA polymerase associates with the early transcription factor (ETF), itself composed of OPG118 and OPG133, thereby allowing the early genes transcription. Late transcription, and probably also intermediate transcription, require newly synthesized RNA polymerase. The chain is DNA-directed RNA polymerase 18 kDa subunit (OPG119) from Vaccinia virus (strain Copenhagen) (VACV).